Here is a 248-residue protein sequence, read N- to C-terminus: Ribosomal RNA small subunit methyltransferase G (248 aa).

Residues Gly85, Phe90, 108–110 (DSS), 137–138 (AE), and Arg156 contribute to the S-adenosyl-L-methionine site.

Belongs to the methyltransferase superfamily. RNA methyltransferase RsmG family.

It localises to the cytoplasm. Its function is as follows. Specifically methylates the N7 position of a guanine in 16S rRNA. The sequence is that of Ribosomal RNA small subunit methyltransferase G from Prochlorococcus marinus (strain NATL1A).